The sequence spans 594 residues: Insulin-like growth factor 2 mRNA-binding protein 3-A (594 aa).

RRM domains follow at residues 2-75 and 81-156; these read NKLY…HSVP and RKLQ…YIPD. Residues 161-177 show a composition bias toward low complexity; sequence PQAPSQQLQQQPQQQHP. Residues 161–206 are disordered; sequence PQAPSQQLQQQPQQQHPQGRRGFGQRGPARQGSPGAAARPKPQTEV. 2 consecutive KH domains span residues 205–270 and 286–353; these read EVPL…CKII and EIPL…EEEI. Positions 392 to 415 are disordered; that stretch reads GMPPPSVGVPSPTSSTSYPPFGQQ. The span at 399-411 shows a compositional bias: low complexity; that stretch reads GVPSPTSSTSYPP. 2 consecutive KH domains span residues 418–483 and 500–566; these read SETV…QGRI and KLET…QRKI.

It belongs to the RRM IMP/VICKZ family. Homodimer and multimer. Associates with microtubules. Interaction with a translocation machinery protein TRAPA of the endoplasmic reticulum. Component of a mRNP complex, at least composed of DAZAP1, IGF2BP3, STAU and VgRBP60. The mRNP complex with DAZAP1, IGF2BP3, STAU and VgRBP60 is only found in the cytoplasm. Interacts with a hnRNP 1 related RNA transport protein VgRBP60 both in the nucleus (in a RNA-independent manner) and the cytoplasm (in a RNA-dependent manner). Found in a B3 activator complex.

It is found in the nucleus. The protein localises to the cytoplasm. The protein resides in the endoplasmic reticulum. Its function is as follows. RNA-binding protein that acts as a regulator of mRNA transport and localization. Binds to the RNA sequence motif 5'-UUCAC-3'. Preferentially binds to N6-methyladenosine (m6A)-containing mRNAs and increases their stability. Mediates the specific association of Vg1 RNA to microtubules. Binds specifically to the vegetal localization elements (VLE or VgLE) in the 3'-UTR of Vg1 and VegT mRNAs. Binds to the Vg1 and VegT mRNAs in both the nucleus and the cytoplasm. May regulate mRNA translation. Acts as a transcription regulator. Binds to the 5'-[TA]GGTTACT-3' motif within element 3 of the TFIIIA gene promoter. The polypeptide is Insulin-like growth factor 2 mRNA-binding protein 3-A (igf2bp3-a) (Xenopus laevis (African clawed frog)).